Consider the following 443-residue polypeptide: MQSVTPPPTQQGKPDPTNSDMMMKRFQEDMVGILDGRSRAHFDDLANYFHSKIRICTCFEPGRSLSVPEFQHVLTFISGYYQHLTEVRSDRWTDHPNYINGIFTYTAMGSDRKNSDGKWTYEASMDWNQNKFLIEYIWFPYNCSVFPVKDPSEPLEDVDNYLERVRTKLSSGLFLPDGVDQTLQNFEEFGDWITDDAIIVVCDEQKMDKNEFIKYMSTRYHHIRKYSNNQFDHVKNNQDFEITFSTTWTADNTTQFRDTYIFRVKKAEDYFPENDRLYLLWKIYWVTKRCTVDVTQYPAVLDGSVILGEVNKRFCGMIDGENWDVYQSFLDLFDPNDTKWGSCVGKREQKYDKIREYMNKVVARYAKCVVSEVRIRNLVHADFSTTFLLSRANEIQEQEELDVGFVGYKNKNGHWKINRMYFECEESKKRKFMDNLLNVRLKC.

The interval 1–21 (MQSVTPPPTQQGKPDPTNSDM) is disordered. Over residues 10 to 20 (QQGKPDPTNSD) the composition is skewed to polar residues.

This is an uncharacterized protein from Caenorhabditis elegans.